We begin with the raw amino-acid sequence, 323 residues long: 3-dehydroquinate synthase (323 aa).

This sequence belongs to the archaeal-type DHQ synthase family.

It catalyses the reaction 2-amino-2,3,7-trideoxy-D-lyxo-hept-6-ulosonate + NAD(+) + H2O = 3-dehydroquinate + NH4(+) + NADH + H(+). Its function is as follows. Catalyzes the oxidative deamination and cyclization of 2-amino-3,7-dideoxy-D-threo-hept-6-ulosonic acid (ADH) to yield 3-dehydroquinate (DHQ), which is fed into the canonical shikimic pathway of aromatic amino acid biosynthesis. The polypeptide is 3-dehydroquinate synthase (Archaeoglobus fulgidus (strain ATCC 49558 / DSM 4304 / JCM 9628 / NBRC 100126 / VC-16)).